The primary structure comprises 650 residues: Threonine--tRNA ligase (650 aa).

In terms of domain architecture, TGS spans 1-66 (MVQITLPDGS…DQDAKLAIVT (66 aa)). Residues 247–538 (DHRKIGRDLD…LIENHAGAMP (292 aa)) are catalytic. Positions 338, 389, and 515 each coordinate Zn(2+).

Belongs to the class-II aminoacyl-tRNA synthetase family. In terms of assembly, homodimer. Zn(2+) is required as a cofactor.

Its subcellular location is the cytoplasm. It carries out the reaction tRNA(Thr) + L-threonine + ATP = L-threonyl-tRNA(Thr) + AMP + diphosphate + H(+). Functionally, catalyzes the attachment of threonine to tRNA(Thr) in a two-step reaction: L-threonine is first activated by ATP to form Thr-AMP and then transferred to the acceptor end of tRNA(Thr). Also edits incorrectly charged L-seryl-tRNA(Thr). The polypeptide is Threonine--tRNA ligase (Bordetella avium (strain 197N)).